The sequence spans 238 residues: Flagellar L-ring protein (238 aa).

An N-terminal signal peptide occupies residues 1–23; that stretch reads MVKLFSYKIKYYLTAFFIIIIQS. Cys24 carries N-palmitoyl cysteine lipidation. Cys24 is lipidated: S-diacylglycerol cysteine.

The protein belongs to the FlgH family. The basal body constitutes a major portion of the flagellar organelle and consists of four rings (L,P,S, and M) mounted on a central rod.

The protein resides in the cell outer membrane. It is found in the bacterial flagellum basal body. Its function is as follows. Assembles around the rod to form the L-ring and probably protects the motor/basal body from shearing forces during rotation. The chain is Flagellar L-ring protein from Buchnera aphidicola subsp. Schizaphis graminum (strain Sg).